The following is a 151-amino-acid chain: Deoxyuridine 5'-triphosphate nucleotidohydrolase (151 aa).

Residues 70–72 (RSG), Asn-83, 87–89 (LID), and Met-97 each bind substrate.

Belongs to the dUTPase family. As to quaternary structure, homotrimer. Requires Mg(2+) as cofactor.

It catalyses the reaction dUTP + H2O = dUMP + diphosphate + H(+). It participates in pyrimidine metabolism; dUMP biosynthesis; dUMP from dCTP (dUTP route): step 2/2. This enzyme is involved in nucleotide metabolism: it produces dUMP, the immediate precursor of thymidine nucleotides and it decreases the intracellular concentration of dUTP so that uracil cannot be incorporated into DNA. This chain is Deoxyuridine 5'-triphosphate nucleotidohydrolase, found in Escherichia coli (strain K12 / MC4100 / BW2952).